Here is a 186-residue protein sequence, read N- to C-terminus: Ribosome-recycling factor (186 aa).

Residues 135–164 (DGMDDLKKAEKDGEIGQDESRAQSERVQKM) are disordered.

This sequence belongs to the RRF family.

The protein resides in the cytoplasm. Functionally, responsible for the release of ribosomes from messenger RNA at the termination of protein biosynthesis. May increase the efficiency of translation by recycling ribosomes from one round of translation to another. This Rhizobium meliloti (strain 1021) (Ensifer meliloti) protein is Ribosome-recycling factor.